A 341-amino-acid polypeptide reads, in one-letter code: Phenylalanine--tRNA ligase alpha subunit (341 aa).

Glu259 is a Mg(2+) binding site.

The protein belongs to the class-II aminoacyl-tRNA synthetase family. Phe-tRNA synthetase alpha subunit type 1 subfamily. As to quaternary structure, tetramer of two alpha and two beta subunits. It depends on Mg(2+) as a cofactor.

Its subcellular location is the cytoplasm. It carries out the reaction tRNA(Phe) + L-phenylalanine + ATP = L-phenylalanyl-tRNA(Phe) + AMP + diphosphate + H(+). This Mycobacterium tuberculosis (strain ATCC 25177 / H37Ra) protein is Phenylalanine--tRNA ligase alpha subunit.